The following is a 314-amino-acid chain: Putative peptide transport system permease protein BRA1092/BS1330_II1084 (314 aa).

Transmembrane regions (helical) follow at residues 12-32 (AIPV…LLPG), 101-121 (LALL…VVAA), 135-155 (LALL…VILF), 177-197 (WLRS…GYLA), 237-257 (VSVL…SVVI), and 286-306 (MLFL…LYTI). The ABC transmembrane type-1 domain maps to 95–304 (LPVTISLALL…AINVLVDILY (210 aa)).

This sequence belongs to the binding-protein-dependent transport system permease family. As to quaternary structure, the complex is composed of two ATP-binding proteins (BRA1094), two transmembrane proteins (BRA1092 and BRA1093) and a solute-binding protein (BRA1090).

The protein resides in the cell inner membrane. In terms of biological role, probably part of an ABC transporter complex that could be involved in peptide import. Probably responsible for the translocation of the substrate across the membrane. This chain is Putative peptide transport system permease protein BRA1092/BS1330_II1084, found in Brucella suis biovar 1 (strain 1330).